The following is a 62-amino-acid chain: Protein gp45.2 (62 aa).

Functionally, may participate in replication-dependent transcriptional events during viral growth. This chain is Protein gp45.2 (45.2), found in Escherichia coli (Bacteriophage T4).